The chain runs to 241 residues: Putative lipoprotein YvcA (241 aa).

Positions 1 to 18 (MKKIIFICFSLLLALTGG) are cleaved as a signal peptide. The N-palmitoyl cysteine moiety is linked to residue Cys19. A lipid anchor (S-diacylglycerol cysteine) is attached at Cys19. The interval 22–48 (NDNDKNSTNDNKTEAVKPKDMDPKDLP) is disordered. Residues 23 to 46 (DNDKNSTNDNKTEAVKPKDMDPKD) are compositionally biased toward basic and acidic residues.

It is found in the cell membrane. Its function is as follows. Required for complex colony architecture. This Bacillus subtilis (strain 168) protein is Putative lipoprotein YvcA (yvcA).